The following is a 469-amino-acid chain: Adenosylhomocysteinase (469 aa).

Substrate-binding residues include Thr-63, Asp-139, and Glu-164. 165–167 (TTT) contributes to the NAD(+) binding site. Residues Lys-194 and Asp-198 each coordinate substrate. NAD(+) is bound by residues Asn-199, 228 to 233 (GYGDVG), Glu-251, Asn-300, 321 to 323 (IGH), and Asn-375.

It belongs to the adenosylhomocysteinase family. Requires NAD(+) as cofactor.

Its subcellular location is the cytoplasm. The enzyme catalyses S-adenosyl-L-homocysteine + H2O = L-homocysteine + adenosine. It participates in amino-acid biosynthesis; L-homocysteine biosynthesis; L-homocysteine from S-adenosyl-L-homocysteine: step 1/1. May play a key role in the regulation of the intracellular concentration of adenosylhomocysteine. The chain is Adenosylhomocysteinase from Pseudomonas fluorescens (strain SBW25).